The primary structure comprises 827 residues: Leucine--tRNA ligase (827 aa).

The 'HIGH' region signature appears at 42-52 (PYPSGKLHMGH). Positions 583–587 (KMSKS) match the 'KMSKS' region motif. Lys-586 is a binding site for ATP.

The protein belongs to the class-I aminoacyl-tRNA synthetase family.

It is found in the cytoplasm. It carries out the reaction tRNA(Leu) + L-leucine + ATP = L-leucyl-tRNA(Leu) + AMP + diphosphate. This is Leucine--tRNA ligase from Pelotomaculum thermopropionicum (strain DSM 13744 / JCM 10971 / SI).